The primary structure comprises 273 residues: Thiazole synthase (273 aa).

Catalysis depends on Lys113, which acts as the Schiff-base intermediate with DXP. Residues Gly174, Ala201–Gly202, and Asn223–Thr224 contribute to the 1-deoxy-D-xylulose 5-phosphate site.

The protein belongs to the ThiG family. As to quaternary structure, homotetramer. Forms heterodimers with either ThiH or ThiS.

It localises to the cytoplasm. It catalyses the reaction [ThiS sulfur-carrier protein]-C-terminal-Gly-aminoethanethioate + 2-iminoacetate + 1-deoxy-D-xylulose 5-phosphate = [ThiS sulfur-carrier protein]-C-terminal Gly-Gly + 2-[(2R,5Z)-2-carboxy-4-methylthiazol-5(2H)-ylidene]ethyl phosphate + 2 H2O + H(+). It functions in the pathway cofactor biosynthesis; thiamine diphosphate biosynthesis. Catalyzes the rearrangement of 1-deoxy-D-xylulose 5-phosphate (DXP) to produce the thiazole phosphate moiety of thiamine. Sulfur is provided by the thiocarboxylate moiety of the carrier protein ThiS. In vitro, sulfur can be provided by H(2)S. This chain is Thiazole synthase, found in Salinibacter ruber (strain DSM 13855 / M31).